Consider the following 839-residue polypeptide: Heat shock 70 kDa protein 4L (839 aa).

Serine 74 and serine 508 each carry phosphoserine. A compositionally biased stretch (basic and acidic residues) spans 503–554; that stretch reads LEGDHSDAPMETETSFKNENKDNMDKMQVDQEEGHQKCHAEHTPEEEIDHTG. Positions 503 to 567 are disordered; it reads LEGDHSDAPM…KSAVSDKQDR (65 aa). Threonine 545 bears the Phosphothreonine mark. Phosphoserine is present on serine 579. Threonine 761 is modified (phosphothreonine). The interval 786–839 is disordered; the sequence is IYKPKPKAEVPEDKPKANSEHNGPMDGQSGTETKSDSTKDSSQHTKSSGEMEVD. Basic and acidic residues-rich tracts occupy residues 791–804 and 818–839; these read PKAE…KANS and TKSD…MEVD.

Belongs to the heat shock protein 70 family. As to quaternary structure, homodimer.

It is found in the cytoplasm. Its subcellular location is the nucleus. Possesses chaperone activity in vitro where it inhibits aggregation of citrate synthase. In Homo sapiens (Human), this protein is Heat shock 70 kDa protein 4L (HSPA4L).